The sequence spans 540 residues: Putative sel1-like repeat-containing protein R815 (540 aa).

6 Sel1-like repeats span residues 129 to 164, 165 to 200, 201 to 236, 237 to 272, 273 to 308, and 309 to 344; these read IDAQTNYGLVNEYGIGVKKNIKKAIKWYKLSCYKEN, LFGLLFLGSLYERGYGVSCDKHMAFNLYEKATKHNY, PAVKRQLAFMYRTGSGTTKNINKSHELYREAANQGY, PLAQYALALQCKYGHGCIKNYKEAETWLIRSYNNGC, LYATYSLARLYIETKSPLRNYSRAFELMQEAASENY, and LLAINYLAKIYKNGIGVNKNISRAIYWYYKAGNSTK.

This is Putative sel1-like repeat-containing protein R815 from Acanthamoeba polyphaga (Amoeba).